Here is a 551-residue protein sequence, read N- to C-terminus: E3 ubiquitin-protein ligase TRIM8 (551 aa).

The RING-type zinc finger occupies 15–56 (CPICLHVFVEPVQLPCKHNFCRGCIGEAWAKDSGLVRCPECN). 2 B box-type zinc fingers span residues 92–132 (CVFC…ARGH) and 140–182 (VRAW…VCDV). Residues 181 to 249 (DVEIRRNEIR…HQLLDEDLRQ (69 aa)) are a coiled coil.

This sequence belongs to the TRIM/RBCC family. In terms of assembly, homodimer. Interacts with SOCS1 (via) SH2 domain and SOCS box. Interacts with HSP90AB1; prevents nucleus translocation of phosphorylated STAT3 and HSP90AB1. Interacts with MAP3K7/TAK1. Interacts with PIAS3. Interacts with TICAM1. Interacts with TRIM15; this interaction prevents TRIM8 cytoplasmic translocation. In terms of tissue distribution, widely expressed. Expressed in glomerular podocytes of kidneys.

The protein localises to the cytoplasm. It localises to the nucleus. Its subcellular location is the nuclear body. The catalysed reaction is S-ubiquitinyl-[E2 ubiquitin-conjugating enzyme]-L-cysteine + [acceptor protein]-L-lysine = [E2 ubiquitin-conjugating enzyme]-L-cysteine + N(6)-ubiquitinyl-[acceptor protein]-L-lysine.. It participates in protein modification; protein ubiquitination. In terms of biological role, E3 ubiquitin-protein ligase that participates in multiple biological processes including cell survival, differentiation, apoptosis, and in particular, the innate immune response. Participates in the activation of interferon-gamma signaling by promoting proteasomal degradation of the repressor SOCS1. Plays a positive role in the TNFalpha and IL-1beta signaling pathways. Mechanistically, induces the 'Lys-63'-linked polyubiquitination of MAP3K7/TAK1 component leading to the activation of NF-kappa-B. Also modulates STAT3 activity through negative regulation of PIAS3, either by degradation of PIAS3 through the ubiquitin-proteasome pathway or exclusion of PIAS3 from the nucleus. Negatively regulates TLR3/4-mediated innate immune response by catalyzing 'Lys-6'- and 'Lys-33'-linked polyubiquitination of TICAM1 and thereby disrupting the TICAM1-TBK1 interaction. The sequence is that of E3 ubiquitin-protein ligase TRIM8 (TRIM8) from Homo sapiens (Human).